Here is a 776-residue protein sequence, read N- to C-terminus: Photosystem I P700 chlorophyll a apoprotein A1 (776 aa).

Transmembrane regions (helical) follow at residues 76–99 (IFSA…FHGA), 162–185 (LMAL…FHYH), 201–225 (LQHH…HVAN), 309–327 (VAHH…GHVY), 368–391 (WHAQ…HHMY), 407–433 (LGLF…IAVI), 455–477 (AIIS…LYIH), and 557–575 (LMIH…LILL). Residues Cys599 and Cys608 each coordinate [4Fe-4S] cluster. 2 helical membrane-spanning segments follow: residues 615-636 (HVFL…YFSW) and 690-712 (LSGY…MFLF). His701 is a binding site for divinylchlorophyll a'. Divinyl chlorophyll a contacts are provided by Met709 and Tyr717. Trp718 is a binding site for phylloquinone. Residues 750–770 (AVGVTHFLFGGIVTTWAFFHA) traverse the membrane as a helical segment.

Belongs to the PsaA/PsaB family. In terms of assembly, the PsaA/B heterodimer binds the P700 divinyl chlorophyll special pair and subsequent electron acceptors. PSI consists of a core antenna complex that captures photons, and an electron transfer chain that converts photonic excitation into a charge separation. The cyanobacterial PSI reaction center is composed of one copy each of PsaA,B,C,D,E,F,I,J,K,L,M and X, and forms trimeric complexes. Requires PSI electron transfer chain: 5 divinyl chlorophyll a, 1 divinyl chlorophyll a', 2 phylloquinones and 3 4Fe-4S clusters. PSI core antenna: 90 divinyl chlorophyll a, 22 carotenoids, 3 phospholipids and 1 galactolipid. P700 is a divinyl chlorophyll a/divinyl chlorophyll a' dimer, A0 is one or more divinyl chlorophyll a, A1 is one or both phylloquinones and FX is a shared 4Fe-4S iron-sulfur center. as cofactor.

Its subcellular location is the cellular thylakoid membrane. It catalyses the reaction reduced [plastocyanin] + hnu + oxidized [2Fe-2S]-[ferredoxin] = oxidized [plastocyanin] + reduced [2Fe-2S]-[ferredoxin]. In terms of biological role, psaA and PsaB bind P700, the primary electron donor of photosystem I (PSI), as well as the electron acceptors A0, A1 and FX. PSI is a plastocyanin/cytochrome c6-ferredoxin oxidoreductase, converting photonic excitation into a charge separation, which transfers an electron from the donor P700 chlorophyll pair to the spectroscopically characterized acceptors A0, A1, FX, FA and FB in turn. Oxidized P700 is reduced on the lumenal side of the thylakoid membrane by plastocyanin or cytochrome c6. The polypeptide is Photosystem I P700 chlorophyll a apoprotein A1 (Prochlorococcus marinus (strain MIT 9303)).